The following is a 362-amino-acid chain: tRNA/tmRNA (uracil-C(5))-methyltransferase (362 aa).

The S-adenosyl-L-methionine site is built by glutamine 186, tyrosine 214, asparagine 219, glutamate 235, and aspartate 295. The Nucleophile role is filled by cysteine 320. Glutamate 354 functions as the Proton acceptor in the catalytic mechanism.

It belongs to the class I-like SAM-binding methyltransferase superfamily. RNA M5U methyltransferase family. TrmA subfamily.

It carries out the reaction uridine(54) in tRNA + S-adenosyl-L-methionine = 5-methyluridine(54) in tRNA + S-adenosyl-L-homocysteine + H(+). The enzyme catalyses uridine(341) in tmRNA + S-adenosyl-L-methionine = 5-methyluridine(341) in tmRNA + S-adenosyl-L-homocysteine + H(+). Its function is as follows. Dual-specificity methyltransferase that catalyzes the formation of 5-methyluridine at position 54 (m5U54) in all tRNAs, and that of position 341 (m5U341) in tmRNA (transfer-mRNA). This chain is tRNA/tmRNA (uracil-C(5))-methyltransferase, found in Stutzerimonas stutzeri (strain A1501) (Pseudomonas stutzeri).